A 419-amino-acid chain; its full sequence is MIDLKLLRENPDAVRRSQLSRGEDPALVDALLTADAARRAVISTADSLRAEQKAASKSVGGASPEERPPLLRRAKELAEQVKAAEADEVEAEAAFTAAHLAISNVIVDGVPAGGEDDYAVLDVVGEPSYLENPKDHLELGESLGLIDMQRGAKVSGSRFYFLTGRGALLQLGLLQLALKLAVDNGFVPTIPPVLVRPEVMVGTGFLGAHAEEVYRVEGDGLYLVGTSEVPLAGYHSGEILDLSRGPLRYAGWSSCFRREAGSHGKDTRGIIRVHQFDKVEGFVYCTPADAEHEHERLLGWQRQMLARIEVPYRVIDVAAGDLGSSAARKFDCEAWIPTQGAYRELTSTSNCTTFQARRLATRYRDASGKPQIAATLNGTLATTRWLVAILENHQRPDGSVRVPDALVPFVGVEVLEPVA.

Position 226–228 (226–228) interacts with L-serine; that stretch reads TSE. Residues 257 to 259 and Val-273 contribute to the ATP site; that span reads RRE. Position 280 (Glu-280) interacts with L-serine. Residue 344–347 coordinates ATP; sequence ELTS. Thr-379 lines the L-serine pocket.

This sequence belongs to the class-II aminoacyl-tRNA synthetase family. Type-1 seryl-tRNA synthetase subfamily. As to quaternary structure, homodimer. The tRNA molecule binds across the dimer.

It localises to the cytoplasm. The enzyme catalyses tRNA(Ser) + L-serine + ATP = L-seryl-tRNA(Ser) + AMP + diphosphate + H(+). The catalysed reaction is tRNA(Sec) + L-serine + ATP = L-seryl-tRNA(Sec) + AMP + diphosphate + H(+). The protein operates within aminoacyl-tRNA biosynthesis; selenocysteinyl-tRNA(Sec) biosynthesis; L-seryl-tRNA(Sec) from L-serine and tRNA(Sec): step 1/1. Catalyzes the attachment of serine to tRNA(Ser). Is also able to aminoacylate tRNA(Sec) with serine, to form the misacylated tRNA L-seryl-tRNA(Sec), which will be further converted into selenocysteinyl-tRNA(Sec). This chain is Serine--tRNA ligase, found in Mycobacterium tuberculosis (strain CDC 1551 / Oshkosh).